A 353-amino-acid chain; its full sequence is Photosystem II protein D1 (353 aa).

N-acetylthreonine is present on Thr-2. Thr-2 is subject to Phosphothreonine. Helical transmembrane passes span 29–46, 118–133, and 142–156; these read YIGW…TATS, HFLL…EWEL, and WIAV…AATA. His-118 serves as a coordination point for chlorophyll a. A pheophytin a-binding site is contributed by Tyr-126. Residues Asp-170 and Glu-189 each contribute to the [CaMn4O5] cluster site. A helical membrane pass occupies residues 197 to 218; sequence FHMLGVAGVFGGSLFSAMHGSL. Residue His-198 coordinates chlorophyll a. A quinone is bound by residues His-215 and 264–265; that span reads SF. His-215 contacts Fe cation. His-272 contacts Fe cation. Residues 274 to 288 traverse the membrane as a helical segment; that stretch reads FLAAWPVVGIWFTAL. His-332, Glu-333, Asp-342, and Ala-344 together coordinate [CaMn4O5] cluster. The propeptide occupies 345 to 353; sequence AVEAPSTNG.

It belongs to the reaction center PufL/M/PsbA/D family. PSII is composed of 1 copy each of membrane proteins PsbA, PsbB, PsbC, PsbD, PsbE, PsbF, PsbH, PsbI, PsbJ, PsbK, PsbL, PsbM, PsbT, PsbX, PsbY, PsbZ, Psb30/Ycf12, at least 3 peripheral proteins of the oxygen-evolving complex and a large number of cofactors. It forms dimeric complexes. Requires The D1/D2 heterodimer binds P680, chlorophylls that are the primary electron donor of PSII, and subsequent electron acceptors. It shares a non-heme iron and each subunit binds pheophytin, quinone, additional chlorophylls, carotenoids and lipids. D1 provides most of the ligands for the Mn4-Ca-O5 cluster of the oxygen-evolving complex (OEC). There is also a Cl(-1) ion associated with D1 and D2, which is required for oxygen evolution. The PSII complex binds additional chlorophylls, carotenoids and specific lipids. as cofactor. Post-translationally, tyr-161 forms a radical intermediate that is referred to as redox-active TyrZ, YZ or Y-Z. C-terminally processed by CTPA; processing is essential to allow assembly of the oxygen-evolving complex and thus photosynthetic growth.

The protein localises to the plastid. It is found in the chloroplast thylakoid membrane. The enzyme catalyses 2 a plastoquinone + 4 hnu + 2 H2O = 2 a plastoquinol + O2. Functionally, photosystem II (PSII) is a light-driven water:plastoquinone oxidoreductase that uses light energy to abstract electrons from H(2)O, generating O(2) and a proton gradient subsequently used for ATP formation. It consists of a core antenna complex that captures photons, and an electron transfer chain that converts photonic excitation into a charge separation. The D1/D2 (PsbA/PsbD) reaction center heterodimer binds P680, the primary electron donor of PSII as well as several subsequent electron acceptors. The polypeptide is Photosystem II protein D1 (Ceratophyllum demersum (Rigid hornwort)).